Reading from the N-terminus, the 61-residue chain is DGYIKKSKGCKVSCVINNVYCNSMCKSLGGSYGYCWTYGLACWCEGLPNAKRWKYETKTCK.

One can recognise an LCN-type CS-alpha/beta domain in the interval 1 to 61 (DGYIKKSKGC…RWKYETKTCK (61 aa)). Disulfide bonds link cysteine 10–cysteine 60, cysteine 14–cysteine 35, cysteine 21–cysteine 42, and cysteine 25–cysteine 44.

This sequence belongs to the long (4 C-C) scorpion toxin superfamily. Sodium channel inhibitor family. Beta subfamily. In terms of tissue distribution, expressed by the venom gland.

The protein resides in the secreted. Depressant insect beta-toxins cause a transient contraction paralysis followed by a slow flaccid paralysis. They bind voltage-independently at site-4 of sodium channels (Nav) and shift the voltage of activation toward more negative potentials thereby affecting sodium channel activation and promoting spontaneous and repetitive firing. This toxin is active only on insects. In Hottentotta tamulus sindicus (Scorpion), this protein is Insect toxin BsIT2.